Here is a 20-residue protein sequence, read N- to C-terminus: 26 kDa protein (20 aa).

The polypeptide is 26 kDa protein (Bacillus cereus).